The chain runs to 203 residues: Outer-membrane lipoprotein LolB (203 aa).

A signal peptide spans 1–17; sequence MNRLFRLLPLASLVLTA. Residue cysteine 18 is the site of N-palmitoyl cysteine attachment. The S-diacylglycerol cysteine moiety is linked to residue cysteine 18.

The protein belongs to the LolB family. In terms of assembly, monomer.

The protein localises to the cell outer membrane. Functionally, plays a critical role in the incorporation of lipoproteins in the outer membrane after they are released by the LolA protein. The protein is Outer-membrane lipoprotein LolB of Klebsiella pneumoniae (strain 342).